A 4568-amino-acid polypeptide reads, in one-letter code: Dynein heavy chain, cytoplasmic (4568 aa).

The stem stretch occupies residues 1-1826 (MDSGNESSII…VVKMANSQFF (1826 aa)). 5 coiled-coil regions span residues 587–652 (QTRL…VLGK), 814–844 (KLAE…NVLK), 1241–1274 (QEAL…LDLS), 1324–1340 (RKIR…LKQL), and 1559–1591 (VNMQ…RERS). AAA stretches follow at residues 1827 to 2049 (YGFE…VLVS), 2118 to 2394 (QQLS…PTPQ), 2498 to 2747 (EIES…WVRG), and 2842 to 3111 (GFYE…GHRV). Residues 1865–1872 (GPAGTGKT), 2163–2170 (GSSGSGKT), 2537–2544 (GPPGSGKT), and 2880–2887 (GTAGAGKT) contribute to the ATP site. 3 coiled-coil regions span residues 3132–3229 (EKRS…AQVE), 3339–3432 (ARAQ…RDRW), and 3707–3739 (NSVI…EVDA). Residues 3132 to 3432 (EKRSDLEEEK…SSLRSERDRW (301 aa)) are stalk. AAA stretches follow at residues 3496-3725 (LSTV…EVAQ) and 3954-4169 (AHRV…TLDA). The stretch at 4359 to 4386 (QLLKDIRRDLNEISAVCRAEKKQNNETR) forms a coiled coil.

This sequence belongs to the dynein heavy chain family. In terms of assembly, consists of at least two heavy chains and a number of intermediate and light chains.

The protein resides in the cytoplasm. Its subcellular location is the cytoskeleton. Functionally, cytoplasmic dynein acts as a motor for the intracellular retrograde motility of vesicles and organelles along microtubules. Dynein has ATPase activity; the force-producing power stroke is thought to occur on release of ADP. May play a role in nuclear migration in hypodermal precursor cells. May be involved in the transport of synaptic vesicle components towards the axon of the DA motor neuron. This function may involve the regulation of dynein by pct-1 and/or cdk-5. Involved in the formation of synapses in the dorsal region during synaptic remodeling of DD motor neurons. Required for anterograde trafficking of dense-core vesicles in the DB motor neuron dendrites. Required for the formation of dendritic branches of PVD sensory neurons. May also play a role in GABAergic synaptic vesicle localization in the ventral nerve cord. May play a role in the pairing of homologous chromosomes during meiosis. This chain is Dynein heavy chain, cytoplasmic, found in Caenorhabditis elegans.